The chain runs to 115 residues: Phosphoribosyl-AMP cyclohydrolase (115 aa).

D80 serves as a coordination point for Mg(2+). C81 lines the Zn(2+) pocket. Positions 82 and 84 each coordinate Mg(2+). Positions 97 and 104 each coordinate Zn(2+).

This sequence belongs to the PRA-CH family. In terms of assembly, homodimer. Mg(2+) serves as cofactor. Zn(2+) is required as a cofactor.

It is found in the cytoplasm. The catalysed reaction is 1-(5-phospho-beta-D-ribosyl)-5'-AMP + H2O = 1-(5-phospho-beta-D-ribosyl)-5-[(5-phospho-beta-D-ribosylamino)methylideneamino]imidazole-4-carboxamide. The protein operates within amino-acid biosynthesis; L-histidine biosynthesis; L-histidine from 5-phospho-alpha-D-ribose 1-diphosphate: step 3/9. Catalyzes the hydrolysis of the adenine ring of phosphoribosyl-AMP. The chain is Phosphoribosyl-AMP cyclohydrolase from Mycobacterium sp. (strain MCS).